A 136-amino-acid chain; its full sequence is Large-conductance mechanosensitive channel (136 aa).

2 helical membrane-spanning segments follow: residues 10–30 and 76–96; these read FAMR…AAFG and GVFI…FMAI.

The protein belongs to the MscL family. As to quaternary structure, homopentamer.

The protein localises to the cell inner membrane. Channel that opens in response to stretch forces in the membrane lipid bilayer. May participate in the regulation of osmotic pressure changes within the cell. This chain is Large-conductance mechanosensitive channel, found in Escherichia coli O127:H6 (strain E2348/69 / EPEC).